The chain runs to 95 residues: Exodeoxyribonuclease 7 small subunit (95 aa).

The segment covering 62 to 83 (LTKDESKKTNKTGFRGESKTTE) has biased composition (basic and acidic residues). The disordered stretch occupies residues 62–95 (LTKDESKKTNKTGFRGESKTTETKNNTAQEEDLF).

The protein belongs to the XseB family. As to quaternary structure, heterooligomer composed of large and small subunits.

Its subcellular location is the cytoplasm. It carries out the reaction Exonucleolytic cleavage in either 5'- to 3'- or 3'- to 5'-direction to yield nucleoside 5'-phosphates.. Bidirectionally degrades single-stranded DNA into large acid-insoluble oligonucleotides, which are then degraded further into small acid-soluble oligonucleotides. This is Exodeoxyribonuclease 7 small subunit from Leptospira interrogans serogroup Icterohaemorrhagiae serovar copenhageni (strain Fiocruz L1-130).